A 63-amino-acid polypeptide reads, in one-letter code: Large ribosomal subunit protein bL28 (63 aa).

Residues 11–20 show a composition bias toward polar residues; sequence GNNSGASVSH. A disordered region spans residues 11-30; sequence GNNSGASVSHSNKKTKRKWK. Over residues 21 to 30 the composition is skewed to basic residues; that stretch reads SNKKTKRKWK.

The protein belongs to the bacterial ribosomal protein bL28 family.

The protein is Large ribosomal subunit protein bL28 of Natranaerobius thermophilus (strain ATCC BAA-1301 / DSM 18059 / JW/NM-WN-LF).